The chain runs to 265 residues: Mlc titration factor A (265 aa).

4 residues coordinate Zn(2+): H111, H148, H152, and E211.

Belongs to the MtfA family. Interacts with Mlc. The cofactor is Zn(2+).

The protein resides in the cytoplasm. In terms of biological role, involved in the modulation of the activity of the glucose-phosphotransferase system (glucose-PTS). Interacts with the transcriptional repressor Mlc, preventing its interaction with DNA and leading to the modulation of expression of genes regulated by Mlc, including ptsG, which encodes the PTS system glucose-specific EIICB component. Its function is as follows. Shows zinc-dependent metallopeptidase activity. The protein is Mlc titration factor A of Escherichia coli O139:H28 (strain E24377A / ETEC).